The chain runs to 207 residues: Macrophage immunometabolism regulator (207 aa).

M1 is modified (N-acetylmethionine). The interval 1–41 is disordered; the sequence is MEVDINGDSRSTLTTLPLPVAEGSSPGKAEAEKPRCSSTPC. Phosphoserine occurs at positions 25 and 167.

Belongs to the UNC119-binding protein family. As to quaternary structure, interacts with UNC119 and UNC119B; interaction preferentially takes place when UNC119 and UNC119B are unliganded with myristoylated proteins. As to expression, highly expressed in photoreceptors.

It is found in the cytoplasm. The protein localises to the cell projection. Its subcellular location is the cilium. Its function is as follows. Regulates the macrophage function, by enhancing the resolution of inflammation and wound repair functions mediated by M2 macrophages. The regulation of macrophage function is, due at least in part, to its ability to inhibit glycolysis. May also play a role in trafficking of proteins via its interaction with UNC119 and UNC119B cargo adapters: may help the release of UNC119 and UNC119B cargo or the recycling of UNC119 and UNC119B. May play a role in ciliary membrane localization via its interaction with UNC119B and protein transport into photoreceptor cells. The sequence is that of Macrophage immunometabolism regulator from Mus musculus (Mouse).